Reading from the N-terminus, the 1179-residue chain is DNA-directed RNA polymerase subunit beta (1179 aa).

This sequence belongs to the RNA polymerase beta chain family. As to quaternary structure, the RNAP catalytic core consists of 2 alpha, 1 beta, 1 beta' and 1 omega subunit. When a sigma factor is associated with the core the holoenzyme is formed, which can initiate transcription.

The enzyme catalyses RNA(n) + a ribonucleoside 5'-triphosphate = RNA(n+1) + diphosphate. In terms of biological role, DNA-dependent RNA polymerase catalyzes the transcription of DNA into RNA using the four ribonucleoside triphosphates as substrates. The chain is DNA-directed RNA polymerase subunit beta from Oceanobacillus iheyensis (strain DSM 14371 / CIP 107618 / JCM 11309 / KCTC 3954 / HTE831).